Here is a 327-residue protein sequence, read N- to C-terminus: E3 ubiquitin-protein ligase SINAT4 (327 aa).

Positions 1–27 are disordered; it reads METDSMECVSSTGNEIHQNGNGHQSYQ. Residues 8–27 show a composition bias toward polar residues; the sequence is CVSSTGNEIHQNGNGHQSYQ. The segment at 64-100 adopts an RING-type zinc-finger fold; sequence CPVCTYSMYPPIHQCHNGHTLCSTCKVRVHNRCPTCR. An SBD region spans residues 114–307; it reads VAESLELPCK…KELKLRVTGK (194 aa). The SIAH-type zinc-finger motif lies at 117-177; the sequence is SLELPCKFYN…LVAHLRDDHK (61 aa). Zn(2+) is bound by residues Cys-122, Cys-129, His-141, Cys-145, Cys-152, Cys-159, His-171, and His-176.

This sequence belongs to the SINA (Seven in absentia) family. As to quaternary structure, interacts with SINAT6. Interacts with WAV3. Interacts with FREE1. Interacts with ELC/VPS23A.

Its subcellular location is the endosome. It localises to the multivesicular body. The protein resides in the cytoplasmic vesicle. It is found in the autophagosome. The catalysed reaction is S-ubiquitinyl-[E2 ubiquitin-conjugating enzyme]-L-cysteine + [acceptor protein]-L-lysine = [E2 ubiquitin-conjugating enzyme]-L-cysteine + N(6)-ubiquitinyl-[acceptor protein]-L-lysine.. It functions in the pathway protein modification; protein ubiquitination. In terms of biological role, E3 ubiquitin-protein ligase that mediates ubiquitination and subsequent proteasomal degradation of target proteins. E3 ubiquitin ligases accept ubiquitin from an E2 ubiquitin-conjugating enzyme in the form of a thioester and then directly transfers the ubiquitin to targeted substrates. It probably triggers the ubiquitin-mediated degradation of different substrates. Modulates directly the ubiquitination and proteasomal-dependent degradation of FREE1, a component of the ESCRT-I complex. Modulates directly the ubiquitination and proteasomal-dependent degradation of ELC/VPS23A, a component of the ESCRT-I complex. The sequence is that of E3 ubiquitin-protein ligase SINAT4 from Arabidopsis thaliana (Mouse-ear cress).